A 94-amino-acid chain; its full sequence is Lipolysis-activating peptide 1-beta chain (94 aa).

The N-terminal stretch at 1-19 is a signal peptide; that stretch reads MKILAVVLISVIVLNTANG. Residues 20–87 form the LCN-type CS-alpha/beta domain; sequence ENYYPQKYTN…FFNALESQCP (68 aa). 3 disulfides stabilise this stretch: Cys34–Cys56, Cys42–Cys66, and Cys46–Cys68.

It belongs to the long (3 C-C) scorpion toxin superfamily. In terms of assembly, homodimer; disulfide-linked or monomer (edited version) or heterodimer of an alpha chain (AC D9U299 or AC D9U2A4) and this beta chain (non-edited version). In terms of tissue distribution, expressed by the venom gland.

It localises to the secreted. Functionally, the homodimer inhibits HMG-CoA reductase (HMGCR) (32% of inhibition produced by 0.6 uM), a glycoprotein involved in the control of cholesterol biosynthesis. The inhibitory effects of bumarsin are seen at much lower concentrations (0.6 uM) than that for statins such as atorvastatin (5 mM) and simvastatin (10 uM). In addition to inhibition of HMG-CoA reductase, this protein lowers cholesterol levels by inducing steroid hormone synthesis via StAR, and by increasing reverse cholesterol transport mediated by the induction of ABCA1 and APOA1. Its function is as follows. The heterodimer non-edited LVP1 induces lipolysis in rat adipocytes. Induction of lipolysis by LVP1 appears to be mediated through the beta-2 adrenergic receptor pathway (ADRB2). The monomer edited version, similar to alpha-toxins, may modulate voltage-gated sodium channels (Nav) and may block voltage-gated potassium channels (Kv). The sequence is that of Lipolysis-activating peptide 1-beta chain from Lychas mucronatus (Chinese swimming scorpion).